Reading from the N-terminus, the 412-residue chain is Putative phosphate permease PF1020 (412 aa).

Transmembrane regions (helical) follow at residues 7-27 (MLAD…AWAI), 50-70 (AVII…KTVT), 88-108 (VLIF…VIAT), 119-139 (SIIG…IVNW), 143-163 (IKVV…AYLV), 187-207 (FWIG…VLHG), 213-233 (GFLK…SLIL), 298-318 (WILA…GYKV), 335-355 (FTID…GMPI), and 384-404 (DIII…GIIF).

This sequence belongs to the inorganic phosphate transporter (PiT) (TC 2.A.20) family.

It localises to the cell membrane. Its function is as follows. Potential transporter for phosphate. The polypeptide is Putative phosphate permease PF1020 (Pyrococcus furiosus (strain ATCC 43587 / DSM 3638 / JCM 8422 / Vc1)).